The primary structure comprises 390 residues: Protein DDI1 homolog (390 aa).

Asp-205 is an active-site residue. The tract at residues 322–344 (MHAPRHQDPATTATTASNPAAPV) is disordered. The span at 330–343 (PATTATTASNPAAP) shows a compositional bias: low complexity.

It belongs to the DDI1 family.

Its subcellular location is the cytoplasm. With respect to regulation, inhibited by pepstatin, diazoacetyl-DL-norleucine methyl ester (DAN) and nelfinavir. Inhibited by the proteinase inhibitors lopinavir and ritonavir. Functionally, aspartic protease. The polypeptide is Protein DDI1 homolog (Leishmania major).